The following is a 417-amino-acid chain: UDP-N-acetylglucosamine 1-carboxyvinyltransferase (417 aa).

A phosphoenolpyruvate-binding site is contributed by Lys-22–Asn-23. Position 93 (Arg-93) interacts with UDP-N-acetyl-alpha-D-glucosamine. Catalysis depends on Cys-117, which acts as the Proton donor. Cys-117 carries the post-translational modification 2-(S-cysteinyl)pyruvic acid O-phosphothioketal. UDP-N-acetyl-alpha-D-glucosamine contacts are provided by residues Arg-122–Gln-126, Asp-305, and Ile-327.

It belongs to the EPSP synthase family. MurA subfamily.

Its subcellular location is the cytoplasm. It carries out the reaction phosphoenolpyruvate + UDP-N-acetyl-alpha-D-glucosamine = UDP-N-acetyl-3-O-(1-carboxyvinyl)-alpha-D-glucosamine + phosphate. It participates in cell wall biogenesis; peptidoglycan biosynthesis. Its function is as follows. Cell wall formation. Adds enolpyruvyl to UDP-N-acetylglucosamine. The chain is UDP-N-acetylglucosamine 1-carboxyvinyltransferase from Nitrosomonas eutropha (strain DSM 101675 / C91 / Nm57).